Reading from the N-terminus, the 550-residue chain is Hydroxylamine reductase (550 aa).

4 residues coordinate [2Fe-2S] cluster: Cys-3, Cys-6, Cys-18, and Cys-25. Residues His-249, Glu-273, Cys-317, Cys-405, Cys-433, Cys-458, Glu-492, and Lys-494 each coordinate hybrid [4Fe-2O-2S] cluster. Cysteine persulfide is present on Cys-405.

Belongs to the HCP family. It depends on [2Fe-2S] cluster as a cofactor. Hybrid [4Fe-2O-2S] cluster serves as cofactor.

The protein resides in the cytoplasm. It carries out the reaction A + NH4(+) + H2O = hydroxylamine + AH2 + H(+). Catalyzes the reduction of hydroxylamine to form NH(3) and H(2)O. The sequence is that of Hydroxylamine reductase from Salmonella agona (strain SL483).